The primary structure comprises 1213 residues: DNA-directed RNA polymerase subunit beta' (1213 aa).

Zn(2+)-binding residues include Cys-60, Cys-62, Cys-75, and Cys-78. Mg(2+)-binding residues include Asp-450, Asp-452, and Asp-454. Positions 819, 893, 900, and 903 each coordinate Zn(2+).

This sequence belongs to the RNA polymerase beta' chain family. In terms of assembly, the RNAP catalytic core consists of 2 alpha, 1 beta, 1 beta' and 1 omega subunit. When a sigma factor is associated with the core the holoenzyme is formed, which can initiate transcription. Mg(2+) serves as cofactor. Requires Zn(2+) as cofactor.

The enzyme catalyses RNA(n) + a ribonucleoside 5'-triphosphate = RNA(n+1) + diphosphate. Functionally, DNA-dependent RNA polymerase catalyzes the transcription of DNA into RNA using the four ribonucleoside triphosphates as substrates. This is DNA-directed RNA polymerase subunit beta' from Streptococcus pyogenes serotype M2 (strain MGAS10270).